The primary structure comprises 3392 residues: Genome polyprotein (3392 aa).

The interaction with host EXOC1 stretch occupies residues 1-15 (MNNQRKKTGRPSFNM). Residues 1–101 (MNNQRKKTGR…LNIMNRRKRS (101 aa)) are Cytoplasmic-facing. The tract at residues 37–72 (LLSGQGPMKLVMAFIAFLRFLAIPPTAGILARWGSF) is hydrophobic; homodimerization of capsid protein C. A propeptide spans 101–114 (SVTMLLMLLPTALA) (ER anchor for the capsid protein C, removed in mature form by serine protease NS3). The helical transmembrane segment at 102 to 119 (VTMLLMLLPTALAFHLTT) threads the bilayer. Over 120-242 (RGGEPHMIVS…QIQKVETWAL (123 aa)) the chain is Extracellular. N-linked (GlcNAc...) asparagine; by host glycosylation is present at Asn183. Residues 243–260 (RHPGFTVIALFLAHAIGT) form a helical membrane-spanning segment. Ser261 is a topological domain (cytoplasmic). The chain crosses the membrane as a helical span at residues 262 to 280 (ITQKGIIFILLMLVTPSMA). The Extracellular segment spans residues 281 to 725 (MRCVGIGNRD…IHQIFGTAYG (445 aa)). 4 disulfides stabilise this stretch: Cys283–Cys310, Cys340–Cys401, Cys354–Cys385, and Cys372–Cys396. Asn347 is a glycosylation site (N-linked (GlcNAc...) asparagine; by host). Residues 378–391 (DRGWGNGCGLFGKG) form a fusion peptide region. Asn433 carries N-linked (GlcNAc...) asparagine; by host glycosylation. 2 disulfides stabilise this stretch: Cys465–Cys565 and Cys582–Cys613. A helical membrane pass occupies residues 726–746 (VLFSGVSWTMKIGIGILLTWL). Over 747 to 752 (GLNSRS) the chain is Cytoplasmic. Residues 753–773 (TSLSMTCIAVGMVTLYLGVMV) traverse the membrane as a helical segment. Residues 774 to 1195 (QADSGCVINW…MVGANASDKM (422 aa)) lie on the Extracellular side of the membrane. 6 disulfide bridges follow: Cys779-Cys790, Cys830-Cys918, Cys954-Cys998, Cys1055-Cys1104, Cys1066-Cys1088, and Cys1087-Cys1091. 2 N-linked (GlcNAc...) asparagine; by host glycosylation sites follow: Asn905 and Asn982. Residue Asn1190 is glycosylated (N-linked (GlcNAc...) asparagine; by host). A helical transmembrane segment spans residues 1196 to 1220 (GMGTTYLALMATFRMRPMFAVGLLF). The Cytoplasmic portion of the chain corresponds to 1221–1226 (RRLTSR). Residues 1227–1245 (EVLLLTVGLSLVASVELPN) form a helical membrane-spanning segment. Topologically, residues 1246–1269 (SLEELGDGLAMGIMMLKLLTDFQS) are lumenal. Residues 1270 to 1290 (HQLWATLLSLTFVKTTFSLHY) traverse the membrane as a helical segment. Ala1291 is a topological domain (cytoplasmic). Residues 1292-1310 (WKTMAMILSIVSLFPLCLS) traverse the membrane as a helical segment. The Lumenal portion of the chain corresponds to 1311-1315 (TTSQK). The chain crosses the membrane as a helical span at residues 1316-1336 (TTWLPVLLGSLGCKPLTMFLI). Residues 1337-1351 (TENKIWGRKSWPLNE) lie on the Cytoplasmic side of the membrane. Residues 1352–1370 (GIMAVGIVSILLSSLLKND) traverse the membrane as a helical segment. Residue Val1371 is a topological domain, lumenal. Residues 1372–1391 (PLAGPLIAGGMLIACYVISG) form a helical membrane-spanning segment. Topologically, residues 1392–1447 (SSADLSLEKAAEVSWEEEAEHSGASHNILVEVQDDGTMKIKDEERDDTLTILLKAT) are cytoplasmic. The tract at residues 1398–1437 (LEKAAEVSWEEEAEHSGASHNILVEVQDDGTMKIKDEERD) is interacts with and activates NS3 protease. An intramembrane region (helical) is located at residues 1448-1468 (LLAISGVYPMSIPATLFVWYF). The Cytoplasmic segment spans residues 1469–2148 (WQKKKQRSGV…MEELPDTIET (680 aa)). The 178-residue stretch at 1476-1653 (SGVLWDTPSP…KASQEGPLPE (178 aa)) folds into the Peptidase S7 domain. Catalysis depends on charge relay system; for serine protease NS3 activity residues His1526, Asp1550, and Ser1610. One can recognise a Helicase ATP-binding domain in the interval 1656 to 1812 (DEVFRKRNLT…QSNAVIQDEE (157 aa)). An important for RNA-binding region spans residues 1660–1663 (RKRN). 1669–1676 (LHPGSGKT) serves as a coordination point for ATP. The DEAH box signature appears at 1760-1763 (DEAH). The Helicase C-terminal domain occupies 1822 to 1988 (SGYDWITDFP…GIIPALFEPE (167 aa)). Lys1864 is modified (N6-acetyllysine; by host). The chain crosses the membrane as a helical span at residues 2149–2169 (LMLLALIAVLTGGVTLFFLSG). The Lumenal segment spans residues 2170–2171 (RG). An intramembrane region (helical) is located at residues 2172–2192 (LGKTSIGLLCVIASSALLWMA). Residue Ser2193 is a topological domain, lumenal. Residues 2194 to 2214 (VEPHWIAASIILEFFLMVLLI) form a helical membrane-spanning segment. Residues 2215–2229 (PEPDRQRTPQDNQLA) lie on the Cytoplasmic side of the membrane. The chain crosses the membrane as a helical span at residues 2230–2244 (YVVIGLLFMILTAAA). The Lumenal portion of the chain corresponds to 2245-2276 (NEMGLLETTKKDLGIGHAAAENHHHAAMLDVD). Positions 2277–2297 (LHPASAWTLYAVATTIITPMM) form an intramembrane region, helical. The Lumenal segment spans residues 2298–2349 (RHTIENTTANISLTAIANQAAILMGLDKGWPISKMDIGVPLLALGCYSQVNP). Residues Asn2303 and Asn2307 are each glycosylated (N-linked (GlcNAc...) asparagine; by host). Residues 2350 to 2370 (LTLTAAVFMLVAHYAIIGPGL) traverse the membrane as a helical segment. The Cytoplasmic portion of the chain corresponds to 2371 to 2415 (QAKATREAQKRTAAGIMKNPTVDGIVAIDLDPVVYDAKFEKQLGQ). A helical transmembrane segment spans residues 2416-2436 (IMLLILCTSQILLMRTTWALC). Topologically, residues 2437–2461 (ESITLATGPLTTLWEGSPGKFWNTT) are lumenal. A glycan (N-linked (GlcNAc...) asparagine; by host) is linked at Asn2459. A helical membrane pass occupies residues 2462-2482 (IAVSMANIFRGSYLAGAGLAF). The Cytoplasmic segment spans residues 2483–3392 (SLMKSLGGGR…NESDPEGALW (910 aa)). In terms of domain architecture, mRNA cap 0-1 NS5-type MT spans 2495-2756 (TGAQGETLGE…DVDLGAGTRH (262 aa)). Ser2549 contacts S-adenosyl-L-methionine. The residue at position 2549 (Ser2549) is a Phosphoserine. The For 2'-O-MTase activity role is filled by Lys2554. Residues 2570-2573 (VIDL) carry the SUMO-interacting motif motif. Residues Gly2579, Trp2580, Thr2597, Lys2598, Asp2624, and Val2625 each coordinate S-adenosyl-L-methionine. Asp2639 (for 2'-O-MTase activity) is an active-site residue. Ile2640 contributes to the S-adenosyl-L-methionine binding site. Residues Lys2673 and Glu2709 each act as for 2'-O-MTase activity in the active site. Tyr2711 is a binding site for S-adenosyl-L-methionine. Residues Glu2930, His2934, Cys2939, and Cys2942 each coordinate Zn(2+). The RdRp catalytic domain occupies 3020-3169 (GNMYADDTAG…KPIDDRFATA (150 aa)). Zn(2+) is bound by residues His3204, Cys3220, and Cys3339.

This sequence in the N-terminal section; belongs to the class I-like SAM-binding methyltransferase superfamily. mRNA cap 0-1 NS5-type methyltransferase family. As to quaternary structure, homodimer. Interacts (via N-terminus) with host EXOC1 (via C-terminus); this interaction results in EXOC1 degradation through the proteasome degradation pathway. In terms of assembly, forms heterodimers with envelope protein E in the endoplasmic reticulum and Golgi. Homodimer; in the endoplasmic reticulum and Golgi. Interacts with protein prM. Interacts with non-structural protein 1. As to quaternary structure, homodimer; Homohexamer when secreted. Interacts with envelope protein E. In terms of assembly, interacts (via N-terminus) with serine protease NS3. Forms a heterodimer with serine protease NS3. May form homooligomers. As to quaternary structure, forms a heterodimer with NS2B. Interacts with NS4B. Interacts with unphosphorylated RNA-directed RNA polymerase NS5; this interaction stimulates RNA-directed RNA polymerase NS5 guanylyltransferase activity. Interacts with host SHFL. In terms of assembly, interacts with host MAVS; this interaction inhibits the synthesis of IFN-beta. Interacts with host SHFL. Interacts with host AUP1; the interaction occurs in the presence of Dengue virus NS4B and induces lipophagy which facilitates production of virus progeny particles. Interacts with serine protease NS3. As to quaternary structure, homodimer. Interacts with host STAT2; this interaction inhibits the phosphorylation of the latter, and, when all viral proteins are present (polyprotein), targets STAT2 for degradation. Interacts with serine protease NS3. Post-translationally, sumoylation of RNA-directed RNA polymerase NS5 increases NS5 protein stability allowing proper viral RNA replication. In terms of processing, specific enzymatic cleavages in vivo yield mature proteins. Cleavages in the lumen of endoplasmic reticulum are performed by host signal peptidase, whereas cleavages in the cytoplasmic side are performed by the Serine protease NS3. Signal cleavage at the 2K-4B site requires a prior NS3 protease-mediated cleavage at the 4A-2K site. Cleaved in post-Golgi vesicles by a host furin, releasing the mature small envelope protein M, and peptide pr. This cleavage is incomplete as up to 30% of viral particles still carry uncleaved prM. Post-translationally, N-glycosylated. The excreted form is glycosylated and this is required for efficient secretion of the protein from infected cells. In terms of processing, acetylated by host KAT5. Acetylation modulates NS3 RNA-binding and unwinding activities and plays an important positive role for viral replication. Phosphorylated on serines residues. This phosphorylation may trigger NS5 nuclear localization. Post-translationally, N-glycosylated.

The protein resides in the virion. It is found in the host nucleus. It localises to the host cytoplasm. The protein localises to the host perinuclear region. Its subcellular location is the secreted. The protein resides in the virion membrane. It is found in the host endoplasmic reticulum membrane. It localises to the host mitochondrion. The catalysed reaction is Selective hydrolysis of -Xaa-Xaa-|-Yaa- bonds in which each of the Xaa can be either Arg or Lys and Yaa can be either Ser or Ala.. The enzyme catalyses RNA(n) + a ribonucleoside 5'-triphosphate = RNA(n+1) + diphosphate. It carries out the reaction a ribonucleoside 5'-triphosphate + H2O = a ribonucleoside 5'-diphosphate + phosphate + H(+). It catalyses the reaction ATP + H2O = ADP + phosphate + H(+). The catalysed reaction is a 5'-end (5'-triphosphoguanosine)-ribonucleoside in mRNA + S-adenosyl-L-methionine = a 5'-end (N(7)-methyl 5'-triphosphoguanosine)-ribonucleoside in mRNA + S-adenosyl-L-homocysteine. The enzyme catalyses a 5'-end (N(7)-methyl 5'-triphosphoguanosine)-ribonucleoside in mRNA + S-adenosyl-L-methionine = a 5'-end (N(7)-methyl 5'-triphosphoguanosine)-(2'-O-methyl-ribonucleoside) in mRNA + S-adenosyl-L-homocysteine + H(+). Its function is as follows. Plays a role in virus budding by binding to the cell membrane and gathering the viral RNA into a nucleocapsid that forms the core of a mature virus particle. During virus entry, may induce genome penetration into the host cytoplasm after hemifusion induced by the surface proteins. Can migrate to the cell nucleus where it modulates host functions. Overcomes the anti-viral effects of host EXOC1 by sequestering and degrading the latter through the proteasome degradation pathway. In terms of biological role, inhibits RNA silencing by interfering with host Dicer. Functionally, prevents premature fusion activity of envelope proteins in trans-Golgi by binding to envelope protein E at pH6.0. After virion release in extracellular space, gets dissociated from E dimers. Acts as a chaperone for envelope protein E during intracellular virion assembly by masking and inactivating envelope protein E fusion peptide. prM is the only viral peptide matured by host furin in the trans-Golgi network probably to avoid catastrophic activation of the viral fusion activity in acidic Golgi compartment prior to virion release. prM-E cleavage is inefficient, and many virions are only partially matured. These uncleaved prM would play a role in immune evasion. Its function is as follows. May play a role in virus budding. Exerts cytotoxic effects by activating a mitochondrial apoptotic pathway through M extodomain. May display a viroporin activity. In terms of biological role, binds to host cell surface receptor and mediates fusion between viral and cellular membranes. Envelope protein is synthesized in the endoplasmic reticulum in the form of heterodimer with protein prM. They play a role in virion budding in the ER, and the newly formed immature particle is covered with 60 spikes composed of heterodimer between precursor prM and envelope protein E. The virion is transported to the Golgi apparatus where the low pH causes dissociation of PrM-E heterodimers and formation of E homodimers. prM-E cleavage is ineficient, and many virions are only partially matured. These uncleaved prM would play a role in immune evasion. Functionally, involved in immune evasion, pathogenesis and viral replication. Once cleaved off the polyprotein, is targeted to three destinations: the viral replication cycle, the plasma membrane and the extracellular compartment. Essential for viral replication. Required for formation of the replication complex and recruitment of other non-structural proteins to the ER-derived membrane structures. Excreted as a hexameric lipoparticle that plays a role against host immune response. Antagonizing the complement function. Binds to the host macrophages and dendritic cells. Inhibits signal transduction originating from Toll-like receptor 3 (TLR3). Disrupts the host endothelial glycocalyx layer of host pulmonary microvascular endothelial cells, inducing degradation of sialic acid and shedding of heparan sulfate proteoglycans. NS1 induces expression of sialidases, heparanase, and activates cathepsin L, which activates heparanase via enzymatic cleavage. These effects are probably linked to the endothelial hyperpermeability observed in severe dengue disease. Its function is as follows. Component of the viral RNA replication complex that functions in virion assembly and antagonizes the host immune response. In terms of biological role, required cofactor for the serine protease function of NS3. May have membrane-destabilizing activity and form viroporins. Functionally, displays three enzymatic activities: serine protease, NTPase and RNA helicase. NS3 serine protease, in association with NS2B, performs its autocleavage and cleaves the polyprotein at dibasic sites in the cytoplasm: C-prM, NS2A-NS2B, NS2B-NS3, NS3-NS4A, NS4A-2K and NS4B-NS5. NS3 RNA helicase binds RNA and unwinds dsRNA in the 3' to 5' direction. Regulates the ATPase activity of the NS3 helicase activity. NS4A allows NS3 helicase to conserve energy during unwinding. Plays a role in the inhibition of the host innate immune response. Interacts with host MAVS and thereby prevents the interaction between RIGI and MAVS. In turn, IFN-beta production is impaired. Interacts with host AUP1 which mediates induction of lipophagy in host cells and facilitates production of virus progeny particles. Its function is as follows. Functions as a signal peptide for NS4B and is required for the interferon antagonism activity of the latter. In terms of biological role, induces the formation of ER-derived membrane vesicles where the viral replication takes place. Inhibits interferon (IFN)-induced host STAT1 phosphorylation and nuclear translocation, thereby preventing the establishment of a cellular antiviral state by blocking the IFN-alpha/beta pathway. Functionally, replicates the viral (+) and (-) RNA genome, and performs the capping of genomes in the cytoplasm. NS5 methylates viral RNA cap at guanine N-7 and ribose 2'-O positions. Besides its role in RNA genome replication, also prevents the establishment of cellular antiviral state by blocking the interferon-alpha/beta (IFN-alpha/beta) signaling pathway. Inhibits host TYK2 and STAT2 phosphorylation, thereby preventing activation of JAK-STAT signaling pathway. The protein is Genome polyprotein of Aedes aegypti (Yellowfever mosquito).